Here is a 226-residue protein sequence, read N- to C-terminus: UPF0758 protein SPJ_1027 (226 aa).

The MPN domain maps to 103–225 (SILSSQKLAK…YFSYREKTDL (123 aa)). Zn(2+)-binding residues include histidine 174, histidine 176, and aspartate 187. The short motif at 174–187 (HNHPSGAVAPSQND) is the JAMM motif element.

Belongs to the UPF0758 family.

The polypeptide is UPF0758 protein SPJ_1027 (Streptococcus pneumoniae (strain JJA)).